The chain runs to 445 residues: Peptide chain release factor 1, mitochondrial (445 aa).

The N-terminal 61 residues, 1 to 61 (MNRHLCVWLF…LLSKNWSRRY (61 aa)), are a transit peptide targeting the mitochondrion. A GGQ domain region spans residues 297–361 (PKDLRIDTFR…LRARLYQQII (65 aa)). The GGQ motif lies at 311 to 313 (GGQ). N5-methylglutamine is present on glutamine 313.

Belongs to the prokaryotic/mitochondrial release factor family. Post-translationally, methylation of glutamine in the GGQ triplet by HEMK1 is conserved from bacteria to mammals.

It is found in the mitochondrion. Its function is as follows. Mitochondrial peptide chain release factor that directs the termination of translation in response to the peptide chain non-canonical stop codons AGG and AGA. Non-canonical termination codons AGG and AGA are found at the end of MT-CO1/COX1 and MT-ND6/ND6 open reading frames, respectively. Recognizes non-canonical stop codons via a network of interactions between the codon, MTRF1 and the ribosomal RNA (rRNA): in contrast to other translation release factors, which identify the codon in the A-site via direct interactions of amino acid side chains with the bases, MTRF1 repositions the first 2 bases of the stop codon to use an intricate network of interactions that includes residues of the release factor, the rRNA of the small ribosomal subunit, as well as neighboring bases of the mRNA. This is Peptide chain release factor 1, mitochondrial from Homo sapiens (Human).